A 159-amino-acid chain; its full sequence is Probable acetolactate synthase small subunit (159 aa).

In terms of domain architecture, ACT spans Thr4–Glu78.

The protein belongs to the acetolactate synthase small subunit family. Dimer of large and small chains.

The enzyme catalyses 2 pyruvate + H(+) = (2S)-2-acetolactate + CO2. Its pathway is amino-acid biosynthesis; L-isoleucine biosynthesis; L-isoleucine from 2-oxobutanoate: step 1/4. It participates in amino-acid biosynthesis; L-valine biosynthesis; L-valine from pyruvate: step 1/4. This chain is Probable acetolactate synthase small subunit (ilvH), found in Archaeoglobus fulgidus (strain ATCC 49558 / DSM 4304 / JCM 9628 / NBRC 100126 / VC-16).